The following is a 350-amino-acid chain: Transmembrane protein 185A (350 aa).

The next 7 helical transmembrane spans lie at 16–36 (LIYACLLLFSVLLALRLDGII), 41–61 (WAVFAPIWLWKLMVIVGASVG), 81–101 (FKAMLIAVGIHLLLLMFEVLV), 111–131 (FWLLVFMPLFFVSPVSVAACV), 177–197 (ILMSFLCLVVLYYIVWSVLFL), 211–231 (ITMALSWMTIVVPLLTFEILL), and 240–260 (AFSCIPIFVPLWLSLITLMAT). The interval 298 to 350 (DLHHEDSEETEETPVPEPPKIAPMFRKKARVVITQSPGKYVLPPPKLNIEMPD) is mediates interaction with MAP1B.

This sequence belongs to the TMEM185 family. Interacts with MAP1B. As to expression, broadly expressed in brain where it is specifically expressed by neurons (at protein level). Also detected in some cells of arterioles, intestine, lung and testis (at protein level).

The protein localises to the cell projection. It is found in the dendrite. It localises to the membrane. The polypeptide is Transmembrane protein 185A (Tmem185a) (Mus musculus (Mouse)).